Reading from the N-terminus, the 765-residue chain is Phosphoribosylformylglycinamidine synthase subunit PurL (765 aa).

Residue histidine 59 is part of the active site. ATP is bound by residues tyrosine 62 and lysine 104. Glutamate 106 is a Mg(2+) binding site. Substrate contacts are provided by residues 107–110 (SHNH) and arginine 129. The active-site Proton acceptor is histidine 108. Mg(2+) is bound at residue aspartate 130. Residue glutamine 254 participates in substrate binding. Aspartate 282 contacts Mg(2+). Residue 326 to 328 (ESQ) coordinates substrate. ATP is bound by residues asparagine 522 and glycine 559. Asparagine 560 contacts Mg(2+). Serine 562 serves as a coordination point for substrate.

The protein belongs to the FGAMS family. In terms of assembly, monomer. Part of the FGAM synthase complex composed of 1 PurL, 1 PurQ and 2 PurS subunits.

The protein localises to the cytoplasm. It catalyses the reaction N(2)-formyl-N(1)-(5-phospho-beta-D-ribosyl)glycinamide + L-glutamine + ATP + H2O = 2-formamido-N(1)-(5-O-phospho-beta-D-ribosyl)acetamidine + L-glutamate + ADP + phosphate + H(+). The protein operates within purine metabolism; IMP biosynthesis via de novo pathway; 5-amino-1-(5-phospho-D-ribosyl)imidazole from N(2)-formyl-N(1)-(5-phospho-D-ribosyl)glycinamide: step 1/2. In terms of biological role, part of the phosphoribosylformylglycinamidine synthase complex involved in the purines biosynthetic pathway. Catalyzes the ATP-dependent conversion of formylglycinamide ribonucleotide (FGAR) and glutamine to yield formylglycinamidine ribonucleotide (FGAM) and glutamate. The FGAM synthase complex is composed of three subunits. PurQ produces an ammonia molecule by converting glutamine to glutamate. PurL transfers the ammonia molecule to FGAR to form FGAM in an ATP-dependent manner. PurS interacts with PurQ and PurL and is thought to assist in the transfer of the ammonia molecule from PurQ to PurL. This chain is Phosphoribosylformylglycinamidine synthase subunit PurL, found in Thermobifida fusca (strain YX).